Here is a 539-residue protein sequence, read N- to C-terminus: Phenylacetyl-CoA ligase epaB (539 aa).

188-199 (RLFSSGTTGLPK) serves as a coordination point for AMP. Positions 449–525 (EVEGVLRNHP…DAIPRNASGK (77 aa)) are AMP-binding.

The protein belongs to the ATP-dependent AMP-binding enzyme family.

It functions in the pathway secondary metabolite biosynthesis. Functionally, phenylacetyl-CoA ligase; part of the gene cluster that mediates the biosynthesis of nigerpyrone and its derivatives carbonarone A and pestalamide A. The biosynthesis pathway begins with the polyketide assembly by epaA to form phenylacetyl triketide precursor from successive condensation of two malonyl-CoA, presumably with one phenylacetyl-CoA starter unit produced by the phenylacetyl-CoA ligase epaB. For the nigerpyrone biosynthesis, the reactive polyketide chain is released as an aldehyde through the R-domain. A nonenzymatic cyclization and dehydration may create nigerpyrone. For the biosynthesis of carbonarone A and pestalamide A, an extra methyl group is added through the C-methyltransferase domain. Several further steps involving the dehydrogenase orf1, the cytochrome P450 monooxygenase orf2 and the FAD-dependent monooxygenase orf3 are required to form a carbonarone A precursor which is converted to carbonarone A via cyclization. The O-acetyltransferase epaC could catalyze the transfer of 2-methylsuccinyl-CoA, a common intermediate in the ethylmalonyl-CoA pathway, to generate the final product pestalamide A. This Aspergillus niger (strain ATCC MYA-4892 / CBS 513.88 / FGSC A1513) protein is Phenylacetyl-CoA ligase epaB.